Consider the following 608-residue polypeptide: ATP-citrate synthase beta chain protein 2 (608 aa).

Residues 214–234 (ILRFNNIPQIKMMVVLGELGG) and 265–291 (FKSEVQFGHAGAKSGGEMESAQAKNQA) contribute to the ATP site. Glu-231 contacts Mg(2+). His-273 (tele-phosphohistidine intermediate) is an active-site residue. Position 292-302 (292-302 (LIDAGAIVPTS)) interacts with CoA.

This sequence belongs to the succinate/malate CoA ligase alpha subunit family. In terms of assembly, heterooctamer of 4 alpha and 4 beta chains. As to expression, expressed in trichomes, epidermal leaf cells, anther tapetal cells, stigma and in young vascular bundles of expanding leaves, cotyledons, roots, pedicel of flowers and siliques.

It is found in the cytoplasm. The protein resides in the cytosol. It carries out the reaction oxaloacetate + acetyl-CoA + ADP + phosphate = citrate + ATP + CoA. ATP citrate-lyase is the primary enzyme responsible for the synthesis of cytosolic acetyl-CoA, used for the elongation of fatty acids and biosynthesis of isoprenoids, flavonoids and malonated derivatives. May supply substrate to the cytosolic acetyl-CoA carboxylase, which generates the malonyl-CoA used for the synthesis of a multitude of compounds, including very long chain fatty acids and flavonoids. Required for normal growth and development and elongation of C18 fatty acids to C20 to C24 fatty acids in seeds. n contrast to all known animal ACL enzymes having a homomeric structure, plant ACLs are composed of alpha and beta chains. This is ATP-citrate synthase beta chain protein 2 from Arabidopsis thaliana (Mouse-ear cress).